A 565-amino-acid chain; its full sequence is Proline--tRNA ligase (565 aa).

Belongs to the class-II aminoacyl-tRNA synthetase family. ProS type 1 subfamily. In terms of assembly, homodimer.

The protein resides in the cytoplasm. The catalysed reaction is tRNA(Pro) + L-proline + ATP = L-prolyl-tRNA(Pro) + AMP + diphosphate. In terms of biological role, catalyzes the attachment of proline to tRNA(Pro) in a two-step reaction: proline is first activated by ATP to form Pro-AMP and then transferred to the acceptor end of tRNA(Pro). As ProRS can inadvertently accommodate and process non-cognate amino acids such as alanine and cysteine, to avoid such errors it has two additional distinct editing activities against alanine. One activity is designated as 'pretransfer' editing and involves the tRNA(Pro)-independent hydrolysis of activated Ala-AMP. The other activity is designated 'posttransfer' editing and involves deacylation of mischarged Ala-tRNA(Pro). The misacylated Cys-tRNA(Pro) is not edited by ProRS. This chain is Proline--tRNA ligase, found in Francisella tularensis subsp. mediasiatica (strain FSC147).